Consider the following 216-residue polypeptide: GTP cyclohydrolase 1 (216 aa).

Residues Cys-108, His-111, and Cys-179 each contribute to the Zn(2+) site.

Belongs to the GTP cyclohydrolase I family. Toroid-shaped homodecamer, composed of two pentamers of five dimers.

It carries out the reaction GTP + H2O = 7,8-dihydroneopterin 3'-triphosphate + formate + H(+). The protein operates within cofactor biosynthesis; 7,8-dihydroneopterin triphosphate biosynthesis; 7,8-dihydroneopterin triphosphate from GTP: step 1/1. The polypeptide is GTP cyclohydrolase 1 (Shewanella oneidensis (strain ATCC 700550 / JCM 31522 / CIP 106686 / LMG 19005 / NCIMB 14063 / MR-1)).